The chain runs to 322 residues: Replication factor C small subunit (322 aa).

46–53 (GSAGVGKT) serves as a coordination point for ATP.

It belongs to the activator 1 small subunits family. RfcS subfamily. In terms of assembly, heteromultimer composed of small subunits (RfcS) and large subunits (RfcL).

Part of the RFC clamp loader complex which loads the PCNA sliding clamp onto DNA. The chain is Replication factor C small subunit from Methanoregula boonei (strain DSM 21154 / JCM 14090 / 6A8).